The primary structure comprises 459 residues: Glycosyl hydrolase family 109 protein (459 aa).

Residues 1–31 (MHNIHRRHFLKAAGAVTAGLITANITASTHA) constitute a signal peptide (tat-type signal). Residues 64 to 65 (ER), aspartate 86, 135 to 138 (WEWH), 155 to 156 (EV), and asparagine 184 each bind NAD(+). Substrate contacts are provided by residues tyrosine 213, arginine 232, 244–247 (YPTH), and tyrosine 326. Position 244 (tyrosine 244) interacts with NAD(+).

The protein belongs to the Gfo/Idh/MocA family. Glycosyl hydrolase 109 subfamily. The cofactor is NAD(+). In terms of processing, predicted to be exported by the Tat system. The position of the signal peptide cleavage has not been experimentally proven.

Its function is as follows. Glycosidase. This Shewanella putrefaciens (strain CN-32 / ATCC BAA-453) protein is Glycosyl hydrolase family 109 protein.